The sequence spans 811 residues: Leucine--tRNA ligase (811 aa).

Residues 38 to 49 (SYPSGSNLHAGH) carry the 'HIGH' region motif. The 'KMSKS' region signature appears at 570 to 574 (KMSKS). Lys573 contributes to the ATP binding site.

The protein belongs to the class-I aminoacyl-tRNA synthetase family.

The protein localises to the cytoplasm. It catalyses the reaction tRNA(Leu) + L-leucine + ATP = L-leucyl-tRNA(Leu) + AMP + diphosphate. The sequence is that of Leucine--tRNA ligase from Clostridium kluyveri (strain ATCC 8527 / DSM 555 / NBRC 12016 / NCIMB 10680 / K1).